The primary structure comprises 578 residues: Sulfite reductase [NADPH] hemoprotein beta-component (578 aa).

[4Fe-4S] cluster contacts are provided by Cys-441, Cys-447, Cys-487, and Cys-491. Cys-491 contacts siroheme.

It belongs to the nitrite and sulfite reductase 4Fe-4S domain family. As to quaternary structure, alpha(8)-beta(8). The alpha component is a flavoprotein, the beta component is a hemoprotein. Requires siroheme as cofactor. [4Fe-4S] cluster serves as cofactor.

The enzyme catalyses hydrogen sulfide + 3 NADP(+) + 3 H2O = sulfite + 3 NADPH + 4 H(+). It participates in sulfur metabolism; hydrogen sulfide biosynthesis; hydrogen sulfide from sulfite (NADPH route): step 1/1. In terms of biological role, component of the sulfite reductase complex that catalyzes the 6-electron reduction of sulfite to sulfide. This is one of several activities required for the biosynthesis of L-cysteine from sulfate. This chain is Sulfite reductase [NADPH] hemoprotein beta-component, found in Vibrio vulnificus (strain YJ016).